Consider the following 95-residue polypeptide: MKVLSISLIFFALLLTGCSQVEKIAPDNFNKIFEEGKQFVENTQTEIEDIDIEQLIEKAKELGFNTEILTALYDELKRIHSIRKLSNCSNSMLLP.

Positions 1 to 21 are cleaved as a signal peptide; the sequence is MKVLSISLIFFALLLTGCSQV.

This is an uncharacterized protein from Archaeoglobus fulgidus (strain ATCC 49558 / DSM 4304 / JCM 9628 / NBRC 100126 / VC-16).